We begin with the raw amino-acid sequence, 338 residues long: Dodecaprenyl-phosphate galacturonate synthase (338 aa).

Helical transmembrane passes span 254-274 (FFGS…LYLG) and 289-309 (MLMV…TGIL).

The protein belongs to the glycosyltransferase 2 family.

The protein resides in the cell membrane. The catalysed reaction is di-trans,nona-cis-dodecaprenyl phosphate + UDP-alpha-D-galacturonate = beta-D-galacturonosyl di-trans,nona-cis-dodecaprenyl phosphate + UDP. Its function is as follows. Glycosyltransferase that catalyzes the synthesis of dodecaprenyl-phosphate galacturonate (Dod-P-GalA), likely from UDP-GalA and dodecaprenyl-phosphate. Dod-P-GalA is the lipid donor required for GalA transfer to lipopolysaccharide (LPS) specific residues catalyzed by the GalA transferases RgtA, RgtB, RgtC and RgtD. The protein is Dodecaprenyl-phosphate galacturonate synthase of Rhizobium johnstonii (strain DSM 114642 / LMG 32736 / 3841) (Rhizobium leguminosarum bv. viciae).